Reading from the N-terminus, the 359-residue chain is Peptide chain release factor 1 (359 aa).

Gln234 is modified (N5-methylglutamine).

Belongs to the prokaryotic/mitochondrial release factor family. In terms of processing, methylated by PrmC. Methylation increases the termination efficiency of RF1.

The protein resides in the cytoplasm. Its function is as follows. Peptide chain release factor 1 directs the termination of translation in response to the peptide chain termination codons UAG and UAA. The polypeptide is Peptide chain release factor 1 (Clavibacter michiganensis subsp. michiganensis (strain NCPPB 382)).